The following is a 66-amino-acid chain: Conotoxin mr5.2 (66 aa).

An N-terminal signal peptide occupies residues 1–19; it reads MRCVPVFVILLLLIASAPT. Residues 20–48 constitute a propeptide that is removed on maturation; sequence VDAQLKTKDDMPLASFHANVKRTLQILRD. Residues E57 and E61 each carry the 4-carboxyglutamate modification. N65 is modified (asparagine amide).

Post-translationally, contains 2 disulfide bonds that can be either 'C1-C3, C2-C4' or 'C1-C4, C2-C3', since these disulfide connectivities have been observed for conotoxins with cysteine framework V (for examples, see AC P0DQQ7 and AC P81755). In terms of tissue distribution, expressed by the venom duct.

It localises to the secreted. In Conus marmoreus (Marble cone), this protein is Conotoxin mr5.2.